The sequence spans 73 residues: Translation initiation factor IF-1 (73 aa).

The S1-like domain occupies 1–73 (MDIKEEAIET…TKGRIVYREK (73 aa)).

The protein belongs to the IF-1 family. In terms of assembly, component of the 30S ribosomal translation pre-initiation complex which assembles on the 30S ribosome in the order IF-2 and IF-3, IF-1 and N-formylmethionyl-tRNA(fMet); mRNA recruitment can occur at any time during PIC assembly.

The protein resides in the cytoplasm. In terms of biological role, one of the essential components for the initiation of protein synthesis. Stabilizes the binding of IF-2 and IF-3 on the 30S subunit to which N-formylmethionyl-tRNA(fMet) subsequently binds. Helps modulate mRNA selection, yielding the 30S pre-initiation complex (PIC). Upon addition of the 50S ribosomal subunit IF-1, IF-2 and IF-3 are released leaving the mature 70S translation initiation complex. In Borreliella afzelii (strain PKo) (Borrelia afzelii), this protein is Translation initiation factor IF-1.